A 176-amino-acid chain; its full sequence is Inorganic pyrophosphatase (176 aa).

3 residues coordinate substrate: lysine 30, arginine 44, and tyrosine 56. Residues aspartate 66, aspartate 71, and aspartate 103 each contribute to the Mg(2+) site. Tyrosine 142 is a binding site for substrate.

This sequence belongs to the PPase family. As to quaternary structure, homohexamer. Requires Mg(2+) as cofactor.

The protein localises to the cytoplasm. It catalyses the reaction diphosphate + H2O = 2 phosphate + H(+). Catalyzes the hydrolysis of inorganic pyrophosphate (PPi) forming two phosphate ions. This is Inorganic pyrophosphatase from Vibrio vulnificus (strain CMCP6).